Consider the following 223-residue polypeptide: Ethylene-inducing xylanase 1 (223 aa).

A signal peptide spans 1–19; the sequence is MVSFTSLLAAFSVVSGVLT. A GH11 domain is found at 34–223; it reads KRTPSSTGTS…SSGSATMTVS (190 aa). Glu-119 acts as the Nucleophile in catalysis. The nuclear localization signal stretch occupies residues 174 to 184; that stretch reads RRTKRTSGSVN. Glu-210 functions as the Proton donor in the catalytic mechanism.

This sequence belongs to the glycosyl hydrolase 11 (cellulase G) family.

It localises to the secreted. The protein localises to the host nucleus. It catalyses the reaction Endohydrolysis of (1-&gt;4)-beta-D-xylosidic linkages in xylans.. Its pathway is glycan degradation; xylan degradation. Endo-1,4-beta-xylanase involved in the hydrolysis of xylan, a major structural heterogeneous polysaccharide found in plant biomass representing the second most abundant polysaccharide in the biosphere, after cellulose. Acts as an effector that localizes to the host nucleus to contribute to the virulence process. Induces host innate immunity responses; triggers BAK1-and SOBIR1-dependent cell death, salicylic acid signaling and jasmonic acid signaling. Does not exhibit any cell death when transiently expressed in N.benthamiana. This chain is Ethylene-inducing xylanase 1, found in Verticillium dahliae (strain VdLs.17 / ATCC MYA-4575 / FGSC 10137) (Verticillium wilt).